The following is a 412-amino-acid chain: Glucose-1-phosphate adenylyltransferase (412 aa).

Alpha-D-glucose 1-phosphate is bound by residues G163, 179-180 (EK), and S197.

The protein belongs to the bacterial/plant glucose-1-phosphate adenylyltransferase family. In terms of assembly, homotetramer.

The enzyme catalyses alpha-D-glucose 1-phosphate + ATP + H(+) = ADP-alpha-D-glucose + diphosphate. The protein operates within glycan biosynthesis; glycogen biosynthesis. Involved in the biosynthesis of ADP-glucose, a building block required for the elongation reactions to produce glycogen. Catalyzes the reaction between ATP and alpha-D-glucose 1-phosphate (G1P) to produce pyrophosphate and ADP-Glc. The polypeptide is Glucose-1-phosphate adenylyltransferase (Frankia casuarinae (strain DSM 45818 / CECT 9043 / HFP020203 / CcI3)).